Consider the following 121-residue polypeptide: Small ribosomal subunit protein uS13 (121 aa).

Residues 94–121 (GLPLRGQRTRTNARTRKGPRKAGVALKK) are disordered.

Belongs to the universal ribosomal protein uS13 family. In terms of assembly, part of the 30S ribosomal subunit. Forms a loose heterodimer with protein S19. Forms two bridges to the 50S subunit in the 70S ribosome.

Its function is as follows. Located at the top of the head of the 30S subunit, it contacts several helices of the 16S rRNA. In the 70S ribosome it contacts the 23S rRNA (bridge B1a) and protein L5 of the 50S subunit (bridge B1b), connecting the 2 subunits; these bridges are implicated in subunit movement. Contacts the tRNAs in the A and P-sites. The polypeptide is Small ribosomal subunit protein uS13 (Ralstonia nicotianae (strain ATCC BAA-1114 / GMI1000) (Ralstonia solanacearum)).